Here is a 601-residue protein sequence, read N- to C-terminus: MTVDRNYIRNFSIVAHIDHGKSTLADRLIQMTGGLETREMKEQVLDSMDIERERGITIKAQTVRLHYKAKNGETYILNLIDTPGHVDFAYEVSRSLAACEGSLLVVDASQGVEAQTLANVYQAIDNSHELVVVLNKVDLPAAEPERVKEQIEDVIGIDTSEAVEISAKTGFGVPDVLEAIVRQLPPPHIGDVKNPLKVMLVDSWYDAYLGVIVLVRVIDGILKKGQIIRMMGTGVKYLVERVGVFTPKMVQVDTLGPGEIGFITASIKEVADTRVGDTITEERRPCENALPGFKPAQPVVFCGIFPIDAADFDGLRAAMGKLRLNDASFSFEMETSAALGFGFRCGFLGLLHLEIIQERLEREFNLDLIATAPSVVYRMNMNNGSVKELHNPADMPDLVKVSSIEEPWIRATIMTPDDYLGAILELCQERRGIQVGLSYVGTRAMVTYNLPLNEVVFDFYDRLKSISKGYASFDYQMTDYSEGDLVKMSILVNGESIDALSMLVHRTVAEKRGRSMCEKLKDLIPQHMFQIPIQAAIGGKIIARETIRALRKDVTAKCYGGDVTRKRKLLEKQKEGKKRMRQFGKVEIPQSAFIEALKMSK.

The tr-type G domain occupies 6–188; sequence NYIRNFSIVA…AIVRQLPPPH (183 aa). Residues 18–23 and 135–138 each bind GTP; these read DHGKST and NKVD.

Belongs to the TRAFAC class translation factor GTPase superfamily. Classic translation factor GTPase family. LepA subfamily.

The protein resides in the cell inner membrane. The enzyme catalyses GTP + H2O = GDP + phosphate + H(+). Functionally, required for accurate and efficient protein synthesis under certain stress conditions. May act as a fidelity factor of the translation reaction, by catalyzing a one-codon backward translocation of tRNAs on improperly translocated ribosomes. Back-translocation proceeds from a post-translocation (POST) complex to a pre-translocation (PRE) complex, thus giving elongation factor G a second chance to translocate the tRNAs correctly. Binds to ribosomes in a GTP-dependent manner. The sequence is that of Elongation factor 4 from Bartonella quintana (strain Toulouse) (Rochalimaea quintana).